The chain runs to 201 residues: Holliday junction branch migration complex subunit RuvA (201 aa).

The tract at residues 1–64 (MIGRLHGKII…EDAHLLFGFA (64 aa)) is domain I. The domain II stretch occupies residues 65-143 (QKQDRTLFRE…GVAQSDFFEE (79 aa)). Positions 144-154 (HSVETIVATHS) are flexible linker. Positions 154–201 (SHDPADEARDALVALGYKLADAEKMIKKVNKAGATSEQLIREALKASL) are domain III.

It belongs to the RuvA family. As to quaternary structure, homotetramer. Forms an RuvA(8)-RuvB(12)-Holliday junction (HJ) complex. HJ DNA is sandwiched between 2 RuvA tetramers; dsDNA enters through RuvA and exits via RuvB. An RuvB hexamer assembles on each DNA strand where it exits the tetramer. Each RuvB hexamer is contacted by two RuvA subunits (via domain III) on 2 adjacent RuvB subunits; this complex drives branch migration. In the full resolvosome a probable DNA-RuvA(4)-RuvB(12)-RuvC(2) complex forms which resolves the HJ.

It localises to the cytoplasm. Functionally, the RuvA-RuvB-RuvC complex processes Holliday junction (HJ) DNA during genetic recombination and DNA repair, while the RuvA-RuvB complex plays an important role in the rescue of blocked DNA replication forks via replication fork reversal (RFR). RuvA specifically binds to HJ cruciform DNA, conferring on it an open structure. The RuvB hexamer acts as an ATP-dependent pump, pulling dsDNA into and through the RuvAB complex. HJ branch migration allows RuvC to scan DNA until it finds its consensus sequence, where it cleaves and resolves the cruciform DNA. This Actinobacillus pleuropneumoniae serotype 5b (strain L20) protein is Holliday junction branch migration complex subunit RuvA.